A 661-amino-acid polypeptide reads, in one-letter code: PAN2-PAN3 deadenylation complex subunit pan3 (661 aa).

Disordered regions lie at residues 1-29 (MASVGKPSLEDARRGTGSPKMKARENAKD) and 53-131 (DPHK…RQDA). The C3H1-type zinc finger occupies 26 to 55 (NAKDTLCRNVTIYGRCRYEDKGCAFNHDPH). Residues 63-83 (NASKKRFNVDSPSFTPSLLPS) carry the PABPC-interacting motif-2 (PAM-2) motif. Residues 77–104 (TPSLLPSNGSSPTSSSSSLKKSSTISPK) are compositionally biased toward low complexity. Polar residues predominate over residues 115–126 (TAASRSNTSTPG). Residues 263 to 524 (QTLPNTQLPA…NIDILINGIS (262 aa)) are pseudokinase domain. ATP is bound by residues R315, 364-371 (DYHPLSKT), and 424-425 (SK). A coiled-coil region spans residues 525–563 (SQLMSTFDSALHLDDQLTSDLGRELENGRLVRLLTKLNF). Residues 564 to 661 (INERPEHEHD…ALLRPSRRPH (98 aa)) form a knob domain region.

It belongs to the protein kinase superfamily. PAN3 family. As to quaternary structure, homodimer. Forms a heterotrimer with a catalytic subunit pan2 to form the poly(a)-nuclease (PAN) deadenylation complex. Interacts (via PAM-2 motif) with poly(A)-binding protein pab1 (via PABC domain), conferring substrate specificity of the enzyme complex.

It localises to the cytoplasm. In terms of biological role, regulatory subunit of the poly(A)-nuclease (PAN) deadenylation complex, one of two cytoplasmic mRNA deadenylases involved in mRNA turnover. PAN specifically shortens poly(A) tails of RNA and the activity is stimulated by poly(A)-binding protein pab1. PAN deadenylation is followed by rapid degradation of the shortened mRNA tails by the CCR4-NOT complex. Deadenylated mRNAs are then degraded by two alternative mechanisms, namely exosome-mediated 3'-5' exonucleolytic degradation, or deadenylation-dependent mRNA decaping and subsequent 5'-3' exonucleolytic degradation by XRN1. May also be involved in post-transcriptional maturation of mRNA poly(A) tails. pan3 acts as a positive regulator for PAN activity, recruiting the catalytic subunit pan2 to mRNA via its interaction with RNA and with pab1. The polypeptide is PAN2-PAN3 deadenylation complex subunit pan3 (Emericella nidulans (strain FGSC A4 / ATCC 38163 / CBS 112.46 / NRRL 194 / M139) (Aspergillus nidulans)).